The sequence spans 278 residues: Dermonecrotic toxin LspiSicTox-betaIE2iii (278 aa).

Residue H5 is part of the active site. Mg(2+) contacts are provided by E25 and D27. Catalysis depends on H41, which acts as the Nucleophile. Cystine bridges form between C45–C51 and C47–C190. A Mg(2+)-binding site is contributed by D85.

Belongs to the arthropod phospholipase D family. Class II subfamily. Mg(2+) serves as cofactor. In terms of tissue distribution, expressed by the venom gland.

It localises to the secreted. It carries out the reaction an N-(acyl)-sphingosylphosphocholine = an N-(acyl)-sphingosyl-1,3-cyclic phosphate + choline. The catalysed reaction is an N-(acyl)-sphingosylphosphoethanolamine = an N-(acyl)-sphingosyl-1,3-cyclic phosphate + ethanolamine. The enzyme catalyses a 1-acyl-sn-glycero-3-phosphocholine = a 1-acyl-sn-glycero-2,3-cyclic phosphate + choline. It catalyses the reaction a 1-acyl-sn-glycero-3-phosphoethanolamine = a 1-acyl-sn-glycero-2,3-cyclic phosphate + ethanolamine. Functionally, dermonecrotic toxins cleave the phosphodiester linkage between the phosphate and headgroup of certain phospholipids (sphingolipid and lysolipid substrates), forming an alcohol (often choline) and a cyclic phosphate. This toxin acts on sphingomyelin (SM). It may also act on ceramide phosphoethanolamine (CPE), lysophosphatidylcholine (LPC) and lysophosphatidylethanolamine (LPE), but not on lysophosphatidylserine (LPS), and lysophosphatidylglycerol (LPG). It acts by transphosphatidylation, releasing exclusively cyclic phosphate products as second products. Induces dermonecrosis, hemolysis, increased vascular permeability, edema, inflammatory response, and platelet aggregation. The sequence is that of Dermonecrotic toxin LspiSicTox-betaIE2iii from Loxosceles spinulosa (Recluse spider).